Reading from the N-terminus, the 469-residue chain is Serine hydroxymethyltransferase, cytosolic (469 aa).

Lys-248 carries the post-translational modification N6-(pyridoxal phosphate)lysine.

The protein belongs to the SHMT family. In terms of assembly, homotetramer. The cofactor is pyridoxal 5'-phosphate.

The protein resides in the cytoplasm. It carries out the reaction (6R)-5,10-methylene-5,6,7,8-tetrahydrofolate + glycine + H2O = (6S)-5,6,7,8-tetrahydrofolate + L-serine. It participates in one-carbon metabolism; tetrahydrofolate interconversion. Its function is as follows. Interconversion of serine and glycine. The sequence is that of Serine hydroxymethyltransferase, cytosolic (SHM2) from Candida glabrata (strain ATCC 2001 / BCRC 20586 / JCM 3761 / NBRC 0622 / NRRL Y-65 / CBS 138) (Yeast).